The primary structure comprises 202 residues: Superoxide dismutase [Mn] (202 aa).

His-27, His-82, Asp-164, and His-168 together coordinate Mn(2+).

This sequence belongs to the iron/manganese superoxide dismutase family. Homodimer. Mn(2+) serves as cofactor.

The enzyme catalyses 2 superoxide + 2 H(+) = H2O2 + O2. Functionally, destroys superoxide anion radicals which are normally produced within the cells and which are toxic to biological systems. The protein is Superoxide dismutase [Mn] (sodA) of Listeria innocua serovar 6a (strain ATCC BAA-680 / CLIP 11262).